The primary structure comprises 340 residues: DNA-directed RNA polymerase subunit alpha (340 aa).

Residues 1 to 236 (MLSLSKNWNT…EQLQLFISFE (236 aa)) form an alpha N-terminal domain (alpha-NTD) region. The interval 251–340 (FSPYLLKRVD…LSKRYEDSYN (90 aa)) is alpha C-terminal domain (alpha-CTD).

Belongs to the RNA polymerase alpha chain family. As to quaternary structure, homodimer. The RNAP catalytic core consists of 2 alpha, 1 beta, 1 beta' and 1 omega subunit. When a sigma factor is associated with the core the holoenzyme is formed, which can initiate transcription.

It catalyses the reaction RNA(n) + a ribonucleoside 5'-triphosphate = RNA(n+1) + diphosphate. DNA-dependent RNA polymerase catalyzes the transcription of DNA into RNA using the four ribonucleoside triphosphates as substrates. This is DNA-directed RNA polymerase subunit alpha from Rickettsia rickettsii (strain Iowa).